Reading from the N-terminus, the 88-residue chain is Ribonuclease P protein component 1 (88 aa).

This sequence belongs to the eukaryotic/archaeal RNase P protein component 1 family. In terms of assembly, consists of a catalytic RNA component and at least 4-5 protein subunits.

The protein localises to the cytoplasm. The enzyme catalyses Endonucleolytic cleavage of RNA, removing 5'-extranucleotides from tRNA precursor.. Functionally, part of ribonuclease P, a protein complex that generates mature tRNA molecules by cleaving their 5'-ends. The chain is Ribonuclease P protein component 1 from Nitrosopumilus maritimus (strain SCM1).